A 312-amino-acid chain; its full sequence is Carbamate kinase 2 (312 aa).

This sequence belongs to the carbamate kinase family.

Its subcellular location is the cytoplasm. It carries out the reaction hydrogencarbonate + NH4(+) + ATP = carbamoyl phosphate + ADP + H2O + H(+). Its pathway is metabolic intermediate metabolism; carbamoyl phosphate degradation; CO(2) and NH(3) from carbamoyl phosphate: step 1/1. This is Carbamate kinase 2 (arcC2) from Enterococcus faecalis (strain ATCC 700802 / V583).